Here is a 148-residue protein sequence, read N- to C-terminus: Lysozyme-like protein 6 (148 aa).

Positions 1–19 (MLKALFICVASCLLVVNDG) are cleaved as a signal peptide. Residues 20–148 (NIIHRCSLAK…SYWMTGCHLG (129 aa)) enclose the C-type lysozyme domain. 4 disulfides stabilise this stretch: C25–C145, C49–C133, C83–C98, and C94–C112. E54 is a catalytic residue. N58 carries N-linked (GlcNAc...) asparagine glycosylation. D71 is a catalytic residue.

This sequence belongs to the glycosyl hydrolase 22 family. In terms of assembly, monomer. As to expression, expressed strongly in testis and epididymis and weakly in seminal vesicle, vas deferens, kidney and spleen. Highly expressed in primary spermatocytes and round spermatids (at protein level).

It is found in the secreted. The protein resides in the cell surface. The protein localises to the cell projection. Its subcellular location is the cilium. It localises to the flagellum. The catalysed reaction is Hydrolysis of (1-&gt;4)-beta-linkages between N-acetylmuramic acid and N-acetyl-D-glucosamine residues in a peptidoglycan and between N-acetyl-D-glucosamine residues in chitodextrins.. In terms of biological role, may be involved sperm-egg plasma membrane adhesion and fusion during fertilization. Exhibits bacteriolytic activity in vitro against Micrococcus luteus and Staphylococcus aureus. Shows weak bacteriolytic activity against Gram-positive bacteria at physiological pH. Bacteriolytic activity is pH-dependent, with a maximum at around pH 5.6. This Mus musculus (Mouse) protein is Lysozyme-like protein 6 (Lyzl6).